A 489-amino-acid polypeptide reads, in one-letter code: Acetyl-coenzyme A carboxylase carboxyl transferase subunit beta, chloroplastic (489 aa).

Residues 222 to 489 (LWVQCENCYG…FFPLNSNSIK (268 aa)) form the CoA carboxyltransferase N-terminal domain. Residues Cys226, Cys229, Cys245, and Cys248 each contribute to the Zn(2+) site. Residues 226–248 (CENCYGLNYKKFFRSKMNICEQC) form a C4-type zinc finger.

It belongs to the AccD/PCCB family. Acetyl-CoA carboxylase is a heterohexamer composed of biotin carboxyl carrier protein, biotin carboxylase and 2 subunits each of ACCase subunit alpha and ACCase plastid-coded subunit beta (accD). Zn(2+) serves as cofactor.

It is found in the plastid. The protein resides in the chloroplast stroma. It catalyses the reaction N(6)-carboxybiotinyl-L-lysyl-[protein] + acetyl-CoA = N(6)-biotinyl-L-lysyl-[protein] + malonyl-CoA. The protein operates within lipid metabolism; malonyl-CoA biosynthesis; malonyl-CoA from acetyl-CoA: step 1/1. Its function is as follows. Component of the acetyl coenzyme A carboxylase (ACC) complex. Biotin carboxylase (BC) catalyzes the carboxylation of biotin on its carrier protein (BCCP) and then the CO(2) group is transferred by the transcarboxylase to acetyl-CoA to form malonyl-CoA. The protein is Acetyl-coenzyme A carboxylase carboxyl transferase subunit beta, chloroplastic of Buxus microphylla (Littleleaf boxwood).